We begin with the raw amino-acid sequence, 198 residues long: MATDISESSGADCKGDTKNSAKLDADYPLRVLYCGVCSLPTEYCEYMPDVAKCRQWLEKNFPNEFAKLTVENSPKQETGITEGQGPVGEEEEKKKQKRGGRGQIKQKKKTVPQKVTIAKIPRAKKKYVTRVCGLATFEIDLKEAQRFFAQKFSCGASVTGEDEIIIQGDFTDDIIDVIQEKWPEVDDDSIEDLGEVKK.

N-acetylalanine is present on A2. Phosphoserine occurs at positions 20 and 73. The segment covering 72 to 81 (NSPKQETGIT) has biased composition (polar residues). A disordered region spans residues 72–109 (NSPKQETGITEGQGPVGEEEEKKKQKRGGRGQIKQKKK). Over residues 95–109 (KQKRGGRGQIKQKKK) the composition is skewed to basic residues. Positions 115–182 (VTIAKIPRAK…DIIDVIQEKW (68 aa)) constitute an SUI1 domain. S189 carries the phosphoserine modification.

The protein belongs to the DENR family. Interacts with MCTS1 (via PUA domain); the complex regulates translation reinitiation.

The protein resides in the cytoplasm. In terms of biological role, translation regulator forming a complex with MCTS1 to promote translation reinitiation. Translation reinitiation is the process where the small ribosomal subunit remains attached to the mRNA following termination of translation of a regulatory upstream ORF (uORF), and resume scanning on the same mRNA molecule to initiate translation of a downstream ORF, usually the main ORF (mORF). The MCTS1/DENR complex is pivotal to two linked mechanisms essential for translation reinitiation. Firstly, the dissociation of deacylated tRNAs from post-termination 40S ribosomal complexes during ribosome recycling. Secondly, the recruitment in an EIF2-independent manner of aminoacylated initiator tRNA to P site of 40S ribosomes for a new round of translation. This regulatory mechanism governs the translation of more than 150 genes which translation reinitiation is MCTS1/DENR complex-dependent. The protein is Density-regulated protein (Denr) of Mus musculus (Mouse).